The sequence spans 517 residues: Maturase K (517 aa).

The protein belongs to the intron maturase 2 family. MatK subfamily.

The protein resides in the plastid. It is found in the chloroplast. In terms of biological role, usually encoded in the trnK tRNA gene intron. Probably assists in splicing its own and other chloroplast group II introns. The protein is Maturase K of Caryota mitis (Burmese fishtail palm).